The sequence spans 176 residues: Epididymal-specific lipocalin-9 (176 aa).

Positions Met-1–Ala-15 are cleaved as a signal peptide. Residues Asn-68 and Asn-129 are each glycosylated (N-linked (GlcNAc...) asparagine). A disulfide bridge links Cys-83 with Cys-161.

Belongs to the calycin superfamily. Lipocalin family.

The protein resides in the secreted. The polypeptide is Epididymal-specific lipocalin-9 (Homo sapiens (Human)).